The sequence spans 598 residues: (-)-endo-fenchol synthase, chloroplastic (598 aa).

The transit peptide at 1–34 (MWSTISISMNVAILKKPLNFLHNSNNKASNPRCV) directs the protein to the chloroplast. Mg(2+) is bound by residues D351, D355, D495, T499, and E503. The DDXXD motif signature appears at 351–355 (DDVYD).

The protein belongs to the terpene synthase family. Mg(2+) serves as cofactor. The cofactor is Mn(2+).

The protein localises to the plastid. It localises to the chloroplast. It catalyses the reaction (2E)-geranyl diphosphate + H2O = (1S,2S,4R)-endo-fenchol + diphosphate. Its pathway is secondary metabolite biosynthesis; terpenoid biosynthesis. Functionally, monoterpene synthase that catalyzes the formation of fenchol from geranyl diphosphate. This is (-)-endo-fenchol synthase, chloroplastic (FES) from Ocimum basilicum (Sweet basil).